Reading from the N-terminus, the 66-residue chain is Large ribosomal subunit protein bL33c (66 aa).

The protein belongs to the bacterial ribosomal protein bL33 family.

It localises to the plastid. The protein localises to the chloroplast. This chain is Large ribosomal subunit protein bL33c, found in Lobularia maritima (Sweet alyssum).